The primary structure comprises 590 residues: Leukocyte immunoglobulin-like receptor subfamily B member 5 (590 aa).

The first 23 residues, 1–23 (MTLTLSVLICLGLSVGPRTCVQA), serve as a signal peptide directing secretion. Residues 24–458 (GTLPKPTLWA…PQSGLGRHLG (435 aa)) are Extracellular-facing. Ig-like C2-type domains lie at 27-116 (PKPT…LELV), 111-228 (DPLE…SLLI), 224-313 (PSLL…DPLD), and 337-418 (GENV…LVVS). An intrachain disulfide couples Cys49 to Cys98. N-linked (GlcNAc...) asparagine glycosylation occurs at Asn139. Cystine bridges form between Cys144/Cys195 and Cys244/Cys295. N-linked (GlcNAc...) asparagine glycans are attached at residues Asn279 and Asn339. Cysteines 344 and 395 form a disulfide. Positions 416–433 (VVSGPSGDPSLSPTGSTP) are enriched in low complexity. The interval 416–449 (VVSGPSGDPSLSPTGSTPTPGPEDQPLTPTGLDP) is disordered. A helical membrane pass occupies residues 459–479 (VVTGVSVAFVLLLFLLLFLLL). At 480–590 (RHRHQSKHRT…PSIYAPLAIH (111 aa)) the chain is on the cytoplasmic side. Disordered stretches follow at residues 488–514 (RTSA…KRAS) and 529–550 (KDTQ…EAPQ). Ser514 carries the phosphoserine modification. An ITIM motif 1 motif is present at residues 552-557 (VTYAQL). The span at 562 to 578 (LRREATEPPPSQEREPP) shows a compositional bias: basic and acidic residues. Positions 562–590 (LRREATEPPPSQEREPPAEPSIYAPLAIH) are disordered. An ITIM motif 2 motif is present at residues 582–587 (SIYAPL).

Detected in a natural killer (NK) cells.

It is found in the membrane. Its function is as follows. May act as receptor for class I MHC antigens. The protein is Leukocyte immunoglobulin-like receptor subfamily B member 5 (LILRB5) of Homo sapiens (Human).